The primary structure comprises 261 residues: Putative cysteine protease YopT-like y4zC (261 aa).

Residues 1 to 15 (MHSPISGSFTSSTQV) show a composition bias toward polar residues. 2 disordered regions span residues 1-48 (MHSP…CPDK) and 54-73 (SKPQ…ARPS). Positions 61–73 (PNNPSTSSPARPS) are enriched in low complexity. Residues cysteine 93, histidine 205, and aspartate 220 contribute to the active site.

This sequence belongs to the peptidase C58 family.

In terms of biological role, potential cysteine protease, which may play a central role after invasion of host cell. The protein is Putative cysteine protease YopT-like y4zC of Sinorhizobium fredii (strain NBRC 101917 / NGR234).